A 103-amino-acid chain; its full sequence is Putative sulfurtransferase YtwF (103 aa).

Residues 17 to 100 (ADEELYLIDV…GMMAWEGETK (84 aa)) form the Rhodanese domain. The active-site Cysteine persulfide intermediate is the C65.

The protein is Putative sulfurtransferase YtwF (ytwF) of Bacillus subtilis (strain 168).